The following is a 155-amino-acid chain: Transcriptional repressor NrdR (155 aa).

The segment at 3 to 34 (CPFCGNIDTQVKDSRPAEDHVSIRRRRFCPAC) is a zinc-finger region. The 91-residue stretch at 49-139 (LVVIKSSGKR…VYKNFQAADD (91 aa)) folds into the ATP-cone domain.

The protein belongs to the NrdR family. Requires Zn(2+) as cofactor.

In terms of biological role, negatively regulates transcription of bacterial ribonucleotide reductase nrd genes and operons by binding to NrdR-boxes. The sequence is that of Transcriptional repressor NrdR from Cereibacter sphaeroides (strain ATCC 17025 / ATH 2.4.3) (Rhodobacter sphaeroides).